Reading from the N-terminus, the 608-residue chain is MSLNALDCARLTGQTPYTVEVFRPIRNIFNRVREYTRASTTSVGLAWMSKYIYQYHRLMLMNLSPREPATEGWPLFLYPPPHLLVGYQYLVRTCNDYVFDTRSYSRLKYTEIHLPLQQKLNWTVMANCSYTINTGAYHRFIDFENFEETLAQVQQAVLAERVVADLALIRPMRGYGTTNMAGDRQVPVEGLLQDHYKNLSQCQNHAWGLADRMRIQNAGNKDIVILTTIRKLKTAFFNFLVSPRNPHTILSLPCDCLWLDAFMQKFTDPSLSQFQTIQSLPSQSVTKSIISALSLPGPAPCTPLSGGAFELRPRENGRAVTEEMRRRRGEMIERFIDRLPMRRRRRRAPPPPPMSEELSEPEVEAFPPASPPRRSFEEEVRDTIVEAIRLLQEELTVSARNEQFFNFAINFYEVIQRLEMLGNINELTIRRWVMYFFVAEHVATTLNYLHHNLRLYPPCSRWVDLELAQVVMRARDHEGQVVYSRVWNEMGENAFSQLMARVSGDLAATVERAGLGELEEEEMEQFMADIAYHENSGDVSEILRQVAINDTEVDSMELSFRFKVTGPVVFSQNRQIQSINRRVVALASQLRMQHRPLPAQHEQVQLPP.

The Nuclear localization signal signature appears at 338–347 (RLPMRRRRRR). Positions 342 to 377 (RRRRRRAPPPPPMSEELSEPEVEAFPPASPPRRSFE) are disordered. At Ser536 the chain carries O-(5'-phospho-DNA)-serine.

The protein belongs to the adenoviridae terminal protein family. Heterodimer with the polymerase; this heterodimer binds to bp 9 to 18 of the genome. Interacts with host POU2F1; POU2F1 binds to the auxiliary sequences in the inverted terminal repeats and tethers the pTP-POL heterodimer to the origin DNA thereby participating in the assembly of the pre-initiation complex (POL-TP-DBP-NFIA-POU2F1). Post-translationally, preterminal protein is used to replicate viral genome, upon genomic encapsidation it is processed first into iTP and finally into TP by adenovirus protease.

The protein localises to the host nucleus matrix. In terms of biological role, protein covalently bound to the viral DNA that acts as a primer for viral genomic replication by DNA strand displacement. Assembles on the viral origin of replication in an initiation complex with viral polymerase, DBP, host NFIA and host POU2F1/OCT1. During initiation, the polymerase covalently couples the first dCTP with Ser-580 of pTP. The terminal protein stimulates the template activity over 20 fold compared to protein-free templates. Neo-synthesized viral genomes are linked to two preterminal proteins, one for each 5' end. These new genomes are encapsidated in the nucleus, and during capsid maturation by viral protease, preterminal protein is first cleaved into intermediary (iTP), then into mature TP. May play a role in host nuclear matrix localization of genomic DNA. This chain is Preterminal protein, found in Canine adenovirus serotype 1 (strain CLL) (CAdV-1).